Reading from the N-terminus, the 128-residue chain is Large ribosomal subunit protein bL19 (128 aa).

Belongs to the bacterial ribosomal protein bL19 family.

In terms of biological role, this protein is located at the 30S-50S ribosomal subunit interface and may play a role in the structure and function of the aminoacyl-tRNA binding site. In Verminephrobacter eiseniae (strain EF01-2), this protein is Large ribosomal subunit protein bL19.